Consider the following 170-residue polypeptide: ATP synthase subunit b (170 aa).

A helical transmembrane segment spans residues Ile-4–Glu-24.

The protein belongs to the ATPase B chain family. In terms of assembly, F-type ATPases have 2 components, F(1) - the catalytic core - and F(0) - the membrane proton channel. F(1) has five subunits: alpha(3), beta(3), gamma(1), delta(1), epsilon(1). F(0) has three main subunits: a(1), b(2) and c(10-14). The alpha and beta chains form an alternating ring which encloses part of the gamma chain. F(1) is attached to F(0) by a central stalk formed by the gamma and epsilon chains, while a peripheral stalk is formed by the delta and b chains.

The protein localises to the cell inner membrane. F(1)F(0) ATP synthase produces ATP from ADP in the presence of a proton or sodium gradient. F-type ATPases consist of two structural domains, F(1) containing the extramembraneous catalytic core and F(0) containing the membrane proton channel, linked together by a central stalk and a peripheral stalk. During catalysis, ATP synthesis in the catalytic domain of F(1) is coupled via a rotary mechanism of the central stalk subunits to proton translocation. Functionally, component of the F(0) channel, it forms part of the peripheral stalk, linking F(1) to F(0). This is ATP synthase subunit b from Aliarcobacter butzleri (strain RM4018) (Arcobacter butzleri).